We begin with the raw amino-acid sequence, 283 residues long: Putative sugar uptake protein BC_0219 (283 aa).

10 consecutive transmembrane segments (helical) span residues L4–V21, G26–F48, A52–G71, V84–A106, W110–F132, L151–I173, A178–S195, A208–V230, F234–G253, and Q260–G279.

It belongs to the GRP transporter (TC 2.A.7.5) family.

Its subcellular location is the cell membrane. The protein is Putative sugar uptake protein BC_0219 of Bacillus cereus (strain ATCC 14579 / DSM 31 / CCUG 7414 / JCM 2152 / NBRC 15305 / NCIMB 9373 / NCTC 2599 / NRRL B-3711).